Consider the following 243-residue polypeptide: Probable flavin-dependent thymidylate synthase (243 aa).

Positions 21–239 (FEVDDFEESK…PNTYQDIPDV (219 aa)) constitute a ThyX domain. FAD-binding positions include S80 and 103–105 (RHR). DUMP-binding positions include 100–103 (ELER), 113–115 (SQR), and R178. The short motif at 103–113 (RHRHLSFSVVS) is the ThyX motif element. An FAD-binding site is contributed by 194 to 196 (NHR). R205 is a binding site for dUMP. The active-site Involved in ionization of N3 of dUMP, leading to its activation is the R205.

This sequence belongs to the thymidylate synthase ThyX family. In terms of assembly, homotetramer. FAD is required as a cofactor.

The catalysed reaction is dUMP + (6R)-5,10-methylene-5,6,7,8-tetrahydrofolate + NADPH + H(+) = dTMP + (6S)-5,6,7,8-tetrahydrofolate + NADP(+). It functions in the pathway pyrimidine metabolism; dTTP biosynthesis. Its function is as follows. Catalyzes the reductive methylation of 2'-deoxyuridine-5'-monophosphate (dUMP) to 2'-deoxythymidine-5'-monophosphate (dTMP) while utilizing 5,10-methylenetetrahydrofolate (mTHF) as the methyl donor, and NADPH and FADH(2) as the reductant. The sequence is that of Probable flavin-dependent thymidylate synthase (48) from Mycobacterium phage L5 (Mycobacteriophage L5).